Consider the following 215-residue polypeptide: Recombination protein RecR (215 aa).

The C4-type zinc-finger motif lies at 74-89 (CQRCGHLSADPICDIC). A Toprim domain is found at 97–191 (GVICVVADSR…RVTRIAYGLP (95 aa)).

The protein belongs to the RecR family.

Functionally, may play a role in DNA repair. It seems to be involved in an RecBC-independent recombinational process of DNA repair. It may act with RecF and RecO. The sequence is that of Recombination protein RecR from Synechococcus sp. (strain RCC307).